The sequence spans 330 residues: Putative glycosyltransferase HI_0258 (330 aa).

The segment covering 1–31 has biased composition (basic and acidic residues); the sequence is MTDRQTDRQTDRQTDRQTDRQTDRQTDRQTD. The interval 1-32 is disordered; sequence MTDRQTDRQTDRQTDRQTDRQTDRQTDRQTDG. UDP-binding positions include 44–49 and 140–141; these read SSDHYY and DV. Mn(2+) contacts are provided by aspartate 140, aspartate 142, and histidine 270. Residue 270–276 participates in UDP binding; that stretch reads HYCGPNK.

The protein belongs to the glycosyltransferase 8 family.

The protein is Putative glycosyltransferase HI_0258 of Haemophilus influenzae (strain ATCC 51907 / DSM 11121 / KW20 / Rd).